Reading from the N-terminus, the 411-residue chain is Arginine biosynthesis bifunctional protein ArgJ (411 aa).

Residues T160, K186, T197, E283, N406, and T411 each coordinate substrate. The Nucleophile role is filled by T197.

It belongs to the ArgJ family. As to quaternary structure, heterotetramer of two alpha and two beta chains.

The protein localises to the cytoplasm. The catalysed reaction is N(2)-acetyl-L-ornithine + L-glutamate = N-acetyl-L-glutamate + L-ornithine. It carries out the reaction L-glutamate + acetyl-CoA = N-acetyl-L-glutamate + CoA + H(+). It participates in amino-acid biosynthesis; L-arginine biosynthesis; L-ornithine and N-acetyl-L-glutamate from L-glutamate and N(2)-acetyl-L-ornithine (cyclic): step 1/1. Its pathway is amino-acid biosynthesis; L-arginine biosynthesis; N(2)-acetyl-L-ornithine from L-glutamate: step 1/4. Feedback inhibition by L-ornithine. Functionally, catalyzes two activities which are involved in the cyclic version of arginine biosynthesis: the synthesis of N-acetylglutamate from glutamate and acetyl-CoA as the acetyl donor, and of ornithine by transacetylation between N(2)-acetylornithine and glutamate. This Halalkalibacterium halodurans (strain ATCC BAA-125 / DSM 18197 / FERM 7344 / JCM 9153 / C-125) (Bacillus halodurans) protein is Arginine biosynthesis bifunctional protein ArgJ.